The primary structure comprises 1162 residues: MMCQKFYVVLLHWEFLYVIAALNLAYPISPWKFKLFCGPPNTTDDSFLSPAGAPNNASALKGASEAIVEAKFNSSGIYVPELSKTVFHCCFGNEQGQNCSALTDNTEGKTLASVVKASVFRQLGVNWDIECWMKGDLTLFICHMEPLPKNPFKNYDSKVHLLYDLPEVIDDSPLPPLKDSFQTVQCNCSLRGCECHVPVPRAKLNYALLMYLEITSAGVSFQSPLMSLQPMLVVKPDPPLGLHMEVTDDGNLKISWDSQTMAPFPLQYQVKYLENSTIVREAAEIVSATSLLVDSVLPGSSYEVQVRSKRLDGSGVWSDWSSPQVFTTQDVVYFPPKILTSVGSNASFHCIYKNENQIISSKQIVWWRNLAEKIPEIQYSIVSDRVSKVTFSNLKATRPRGKFTYDAVYCCNEQACHHRYAELYVIDVNINISCETDGYLTKMTCRWSPSTIQSLVGSTVQLRYHRRSLYCPDSPSIHPTSEPKNCVLQRDGFYECVFQPIFLLSGYTMWIRINHSLGSLDSPPTCVLPDSVVKPLPPSNVKAEITVNTGLLKVSWEKPVFPENNLQFQIRYGLSGKEIQWKTHEVFDAKSKSASLLVSDLCAVYVVQVRCRRLDGLGYWSNWSSPAYTLVMDVKVPMRGPEFWRKMDGDVTKKERNVTLLWKPLTKNDSLCSVRRYVVKHRTAHNGTWSEDVGNRTNLTFLWTEPAHTVTVLAVNSLGASLVNFNLTFSWPMSKVSAVESLSAYPLSSSCVILSWTLSPDDYSLLYLVIEWKILNEDDGMKWLRIPSNVKKFYIHDNFIPIEKYQFSLYPVFMEGVGKPKIINGFTKDAIDKQQNDAGLYVIVPIIISSCVLLLGTLLISHQRMKKLFWDDVPNPKNCSWAQGLNFQKPETFEHLFTKHAESVIFGPLLLEPEPISEEISVDTAWKNKDEMVPAAMVSLLLTTPDPESSSICISDQCNSANFSGSQSTQVTCEDECQRQPSVKYATLVSNDKLVETDEEQGFIHSPVSNCISSNHSPLRQSFSSSSWETEAQTFFLLSDQQPTMISPQLSFSGLDELLELEGSFPEENHREKSVCYLGVTSVNRRESGVLLTGEAGILCTFPAQCLFSDIRILQERCSHFVENNLSLGTSGENFVPYMPQFQTCSTHSHKIMENKMCDLTV.

The N-terminal stretch at 1 to 21 (MMCQKFYVVLLHWEFLYVIAA) is a signal peptide. Residues 22-839 (LNLAYPISPW…AIDKQQNDAG (818 aa)) are Extracellular-facing. 5 disulfides stabilise this stretch: C37–C90, C89–C99, C131–C142, C186–C195, and C188–C193. Residues N41, N56, N73, and N98 are each glycosylated (N-linked (GlcNAc...) asparagine). N-linked (GlcNAc...) asparagine glycosylation occurs at N187. The 94-residue stretch at 238-331 (PPLGLHMEVT…SPQVFTTQDV (94 aa)) folds into the Fibronectin type-III 1 domain. N-linked (GlcNAc...) asparagine glycosylation is found at N275 and N345. Residues 329–427 (QDVVYFPPKI…HRYAELYVID (99 aa)) enclose the Ig-like domain. 2 disulfide bridges follow: C350/C410 and C411/C416. The N-linked (GlcNAc...) asparagine glycan is linked to N431. Intrachain disulfides connect C434–C445, C471–C526, and C486–C496. A leptin-binding region spans residues 465 to 482 (HRRSLYCPDSPSIHPTSE). Residues N514, N622, N657, N668, N686, N695, N698, and N726 are each glycosylated (N-linked (GlcNAc...) asparagine). Fibronectin type-III domains are found at residues 537-632 (PPSN…TLVM), 637-729 (PMRG…NLTF), and 738-832 (AVES…DAID). Positions 620-624 (WSNWS) match the WSXWS motif motif. The helical transmembrane segment at 840–860 (LYVIVPIIISSCVLLLGTLLI) threads the bilayer. Over 861-1162 (SHQRMKKLFW…MENKMCDLTV (302 aa)) the chain is Cytoplasmic. The short motif at 869–877 (FWDDVPNPK) is the Box 1 motif element. Position 880 is a phosphoserine (S880). A required for JAK2 activation region spans residues 891 to 896 (ETFEHL). The interval 896–904 (LFTKHAESV) is required for STAT3 phosphorylation. At Y985 the chain carries Phosphotyrosine; by JAK2. Y1077 bears the Phosphotyrosine mark. The residue at position 1138 (Y1138) is a Phosphotyrosine; by JAK2.

It belongs to the type I cytokine receptor family. Type 2 subfamily. In terms of assembly, present as a mixture of monomers and dimers. The phosphorylated receptor binds a number of SH2 domain-containing proteins such as JAK2, STAT3, PTPN11, and SOCS3. Interaction with SOCS3 inhibits JAK/STAT signaling and MAPK cascade. Post-translationally, on ligand binding, phosphorylated on two conserved C-terminal tyrosine residues (isoform B only) by JAK2. Tyr-985 is required for complete binding and activation of PTPN11, ERK/FOS activation,for interaction with SOCS3 and SOCS3 mediated inhibition of leptin signaling. Phosphorylation on Tyr-1138 is required for STAT3 binding/activation. Phosphorylation of Tyr-1077 has a more accessory role. As to expression, isoform A: highest level of expression in lung and kidney, also present in heart, brain, spleen, liver, muscle, choroid plexus and hypothalamus. Isoform B: highest levels of expression in hypothalamus and lower levels in brain, testes and adipose tissue. Expressed by neurons of the parabrachial nucleus. Expressed by peripheral blood mononuclear cells and CD4(+) T-cells. Isoform E: expressed in adipose tissue, liver, hypothalamus, cerebral microvessels, heart, and testes.

The protein localises to the cell membrane. Its subcellular location is the basolateral cell membrane. It localises to the secreted. Its function is as follows. Receptor for hormone LEP/leptin. On ligand binding, mediates LEP central and peripheral effects through the activation of different signaling pathways such as JAK2/STAT3 and MAPK cascade/FOS. In the hypothalamus, LEP acts as an appetite-regulating factor that induces a decrease in food intake and an increase in energy consumption by inducing anorexinogenic factors and suppressing orexigenic neuropeptides, also regulates bone mass and secretion of hypothalamo-pituitary-adrenal hormones. In the periphery, increases basal metabolism, influences reproductive function, regulates pancreatic beta-cell function and insulin secretion, is pro-angiogenic and affects innate and adaptive immunity. Control of energy homeostasis and melanocortin production (stimulation of POMC and full repression of AgRP transcription) is mediated by STAT3 signaling, whereas distinct signals regulate NPY and the control of fertility, growth and glucose homeostasis. Involved in the regulation of counter-regulatory response to hypoglycemia by inhibiting neurons of the parabrachial nucleus. Has a specific effect on T lymphocyte responses, differentially regulating the proliferation of naive and memory T-cells. Leptin increases Th1 and suppresses Th2 cytokine production. In terms of biological role, may transport LEP across the blood-brain barrier. Binds LEP and mediates LEP endocytosis. Does not induce phosphorylation of and activate STAT3. Antagonizes Isoform A and isoform B-mediated LEP binding and endocytosis. The polypeptide is Leptin receptor (Lepr) (Mus musculus (Mouse)).